Reading from the N-terminus, the 442-residue chain is tRNA-2-methylthio-N(6)-dimethylallyladenosine synthase (442 aa).

The 119-residue stretch at lysine 2 to threonine 120 folds into the MTTase N-terminal domain. Residues cysteine 11, cysteine 49, cysteine 83, cysteine 157, cysteine 161, and cysteine 164 each coordinate [4Fe-4S] cluster. Positions arginine 143 to arginine 375 constitute a Radical SAM core domain. Positions glutamine 378–glutamate 441 constitute a TRAM domain.

The protein belongs to the methylthiotransferase family. MiaB subfamily. In terms of assembly, monomer. It depends on [4Fe-4S] cluster as a cofactor.

The protein resides in the cytoplasm. The enzyme catalyses N(6)-dimethylallyladenosine(37) in tRNA + (sulfur carrier)-SH + AH2 + 2 S-adenosyl-L-methionine = 2-methylsulfanyl-N(6)-dimethylallyladenosine(37) in tRNA + (sulfur carrier)-H + 5'-deoxyadenosine + L-methionine + A + S-adenosyl-L-homocysteine + 2 H(+). Functionally, catalyzes the methylthiolation of N6-(dimethylallyl)adenosine (i(6)A), leading to the formation of 2-methylthio-N6-(dimethylallyl)adenosine (ms(2)i(6)A) at position 37 in tRNAs that read codons beginning with uridine. The chain is tRNA-2-methylthio-N(6)-dimethylallyladenosine synthase from Neisseria meningitidis serogroup A / serotype 4A (strain DSM 15465 / Z2491).